Here is a 358-residue protein sequence, read N- to C-terminus: Endo-1,4-beta-xylanase B (358 aa).

Positions 1-17 (MRFSASLLLALTGSAAA) are cleaved as a signal peptide. The region spanning 40-352 (QGLDAAMKAA…KAAYNAFLRG (313 aa)) is the GH10 domain. Asn136 carries an N-linked (GlcNAc...) asparagine glycan. Residue Glu166 is the Proton donor of the active site. Glu274 serves as the catalytic Nucleophile.

It belongs to the glycosyl hydrolase 10 (cellulase F) family.

Its subcellular location is the secreted. It catalyses the reaction Endohydrolysis of (1-&gt;4)-beta-D-xylosidic linkages in xylans.. It functions in the pathway glycan degradation; xylan degradation. Its activity is regulated as follows. Partial inhibition of activity is detected in the presence of Ag(+), Cu2(+) and SDS. Like most fungal xylanases, activity is completely inhibited by Hg(2+) since Hg(2+) could interact with tryptophan residues and oxidize the indole ring. Beta-mercaptoethanol enhances the enzymatic activity by counteracting the oxidation effects of the S-S linkage between cysteine residues. In terms of biological role, endo-1,4-beta-xylanase involved in the hydrolysis of xylan, a major structural heterogeneous polysaccharide found in plant biomass representing the second most abundant polysaccharide in the biosphere, after cellulose. Is more active on soluble wheat arabinoxylan (defined as 100%) than on birchwood xylan (75.4%) and beechwood xylan (70.8%), and less active on insoluble wheat arabinoxylan (17.4%). Xylose is the major hydrolysis product of XynB. The polypeptide is Endo-1,4-beta-xylanase B (Humicola insolens (Soft-rot fungus)).